A 283-amino-acid chain; its full sequence is Formamidopyrimidine-DNA glycosylase (283 aa).

Catalysis depends on P2, which acts as the Schiff-base intermediate with DNA. Catalysis depends on E3, which acts as the Proton donor. Residue K58 is the Proton donor; for beta-elimination activity of the active site. H100, R119, and R162 together coordinate DNA. The FPG-type zinc finger occupies 247 to 283; sequence DVYGREGEPCRRAGCDGTVQRITQSGRSSFYCAQCQR. R273 functions as the Proton donor; for delta-elimination activity in the catalytic mechanism.

Belongs to the FPG family. In terms of assembly, monomer. Requires Zn(2+) as cofactor.

The catalysed reaction is Hydrolysis of DNA containing ring-opened 7-methylguanine residues, releasing 2,6-diamino-4-hydroxy-5-(N-methyl)formamidopyrimidine.. It catalyses the reaction 2'-deoxyribonucleotide-(2'-deoxyribose 5'-phosphate)-2'-deoxyribonucleotide-DNA = a 3'-end 2'-deoxyribonucleotide-(2,3-dehydro-2,3-deoxyribose 5'-phosphate)-DNA + a 5'-end 5'-phospho-2'-deoxyribonucleoside-DNA + H(+). Involved in base excision repair of DNA damaged by oxidation or by mutagenic agents. Acts as a DNA glycosylase that recognizes and removes damaged bases. Has a preference for oxidized purines, such as 7,8-dihydro-8-oxoguanine (8-oxoG). Has AP (apurinic/apyrimidinic) lyase activity and introduces nicks in the DNA strand. Cleaves the DNA backbone by beta-delta elimination to generate a single-strand break at the site of the removed base with both 3'- and 5'-phosphates. The chain is Formamidopyrimidine-DNA glycosylase from Ruegeria pomeroyi (strain ATCC 700808 / DSM 15171 / DSS-3) (Silicibacter pomeroyi).